A 485-amino-acid polypeptide reads, in one-letter code: Glycogen synthase (485 aa).

Residue K15 participates in ADP-alpha-D-glucose binding.

It belongs to the glycosyltransferase 1 family. Bacterial/plant glycogen synthase subfamily.

It carries out the reaction [(1-&gt;4)-alpha-D-glucosyl](n) + ADP-alpha-D-glucose = [(1-&gt;4)-alpha-D-glucosyl](n+1) + ADP + H(+). It functions in the pathway glycan biosynthesis; glycogen biosynthesis. In terms of biological role, synthesizes alpha-1,4-glucan chains using ADP-glucose. The sequence is that of Glycogen synthase from Thermosipho africanus (strain TCF52B).